We begin with the raw amino-acid sequence, 473 residues long: MAVSRATLFDKVWDLHTVGTLASGQTQLFIGLHLIHEVTSPQAFAMLRERGLGVLYAERTVATVDHIVPTQSQQRPFADTLAEQMIRALEDNCAEFGIRFYNIGSGSQGIVHVIAPEQGFTQPGMTIACGDSHTATHGAFGAIAFGIGTSQVRDVLATQTLALDKLKVRRIEMNGSLHPGVFAKDVILHIIRKLGVKAGVGYAYEFAGTTFEAMNMEERMTVCNMAIEGGARCGYINPDAVTYAYLKGRDFAPQGADWERAVAWWENLRSDPDAQYDDTIHFDAAEIAPTVTWGITPGQGIAVDEIVPRPEELPGEDRPLAEEAYRYMDLAPGVPIVGTKVDVCFIGSCTNGRLSDLREAANLARGRHVAPGVKAFVVPGSERVKRQAEAEGLHEVFLEAGFEWREPGCSMCLAMNPDRLEGRQLSASSSNRNFKGRQGSASGRTLLMSPAMVVAAAVSGAVADVRALLEPTP.

Residues Cys349, Cys409, and Cys412 each coordinate [4Fe-4S] cluster.

The protein belongs to the aconitase/IPM isomerase family. LeuC type 1 subfamily. In terms of assembly, heterodimer of LeuC and LeuD. The cofactor is [4Fe-4S] cluster.

The catalysed reaction is (2R,3S)-3-isopropylmalate = (2S)-2-isopropylmalate. Its pathway is amino-acid biosynthesis; L-leucine biosynthesis; L-leucine from 3-methyl-2-oxobutanoate: step 2/4. In terms of biological role, catalyzes the isomerization between 2-isopropylmalate and 3-isopropylmalate, via the formation of 2-isopropylmaleate. The sequence is that of 3-isopropylmalate dehydratase large subunit from Gloeobacter violaceus (strain ATCC 29082 / PCC 7421).